We begin with the raw amino-acid sequence, 469 residues long: Ribosomal protein uS12 methylthiotransferase RimO (469 aa).

The region spanning 34–144 (NKIGFVSLGC…VLEHVHQFAP (111 aa)) is the MTTase N-terminal domain. The [4Fe-4S] cluster site is built by Cys43, Cys79, Cys108, Cys176, Cys180, and Cys183. Positions 162–399 (LTPKHYAYLK…MLVQQEISAA (238 aa)) constitute a Radical SAM core domain. The region spanning 402–468 (QKRIGSTMKV…EYDLWGSLVR (67 aa)) is the TRAM domain.

Belongs to the methylthiotransferase family. RimO subfamily. [4Fe-4S] cluster is required as a cofactor.

Its subcellular location is the cytoplasm. It catalyses the reaction L-aspartate(89)-[ribosomal protein uS12]-hydrogen + (sulfur carrier)-SH + AH2 + 2 S-adenosyl-L-methionine = 3-methylsulfanyl-L-aspartate(89)-[ribosomal protein uS12]-hydrogen + (sulfur carrier)-H + 5'-deoxyadenosine + L-methionine + A + S-adenosyl-L-homocysteine + 2 H(+). Catalyzes the methylthiolation of an aspartic acid residue of ribosomal protein uS12. The chain is Ribosomal protein uS12 methylthiotransferase RimO from Vibrio vulnificus (strain CMCP6).